The chain runs to 98 residues: Cobalt transport protein CbiN (98 aa).

2 helical membrane-spanning segments follow: residues 6–26 (VLMI…YSGL) and 68–88 (SLLF…FFGY).

It belongs to the CbiN family. In terms of assembly, forms an energy-coupling factor (ECF) transporter complex composed of an ATP-binding protein (A component, CbiO), a transmembrane protein (T component, CbiQ) and 2 possible substrate-capture proteins (S components, CbiM and CbiN) of unknown stoichimetry.

It is found in the cell membrane. It participates in cofactor biosynthesis; adenosylcobalamin biosynthesis. Its function is as follows. Part of the energy-coupling factor (ECF) transporter complex CbiMNOQ involved in cobalt import. The protein is Cobalt transport protein CbiN of Methanococcus maripaludis (strain DSM 14266 / JCM 13030 / NBRC 101832 / S2 / LL).